The primary structure comprises 218 residues: Peptide methionine sulfoxide reductase MsrA (218 aa).

Cys-57 is a catalytic residue.

Belongs to the MsrA Met sulfoxide reductase family.

The enzyme catalyses L-methionyl-[protein] + [thioredoxin]-disulfide + H2O = L-methionyl-(S)-S-oxide-[protein] + [thioredoxin]-dithiol. It catalyses the reaction [thioredoxin]-disulfide + L-methionine + H2O = L-methionine (S)-S-oxide + [thioredoxin]-dithiol. Functionally, has an important function as a repair enzyme for proteins that have been inactivated by oxidation. Catalyzes the reversible oxidation-reduction of methionine sulfoxide in proteins to methionine. The chain is Peptide methionine sulfoxide reductase MsrA from Brucella suis biovar 1 (strain 1330).